The following is a 251-amino-acid chain: Flap endonuclease Xni (251 aa).

Position 104 (aspartate 104) interacts with Mg(2+). The 90-residue stretch at 160 to 249 (VQPQQLPDYW…IDGNLQQLRL (90 aa)) folds into the 5'-3' exonuclease domain. K(+) is bound by residues leucine 171, alanine 172, proline 180, valine 182, and isoleucine 185. The segment at 184-189 (GIGPKS) is interaction with DNA.

This sequence belongs to the Xni family. Requires Mg(2+) as cofactor. K(+) serves as cofactor.

Its function is as follows. Has flap endonuclease activity. During DNA replication, flap endonucleases cleave the 5'-overhanging flap structure that is generated by displacement synthesis when DNA polymerase encounters the 5'-end of a downstream Okazaki fragment. The chain is Flap endonuclease Xni from Escherichia coli O17:K52:H18 (strain UMN026 / ExPEC).